Here is a 334-residue protein sequence, read N- to C-terminus: Adenosine deaminase (334 aa).

Zn(2+) contacts are provided by histidine 12 and histidine 14. Substrate-binding residues include histidine 14, aspartate 16, and glycine 170. Residue histidine 197 participates in Zn(2+) binding. The Proton donor role is filled by glutamate 200. Aspartate 278 serves as a coordination point for Zn(2+). Aspartate 279 contacts substrate.

The protein belongs to the metallo-dependent hydrolases superfamily. Adenosine and AMP deaminases family. Adenosine deaminase subfamily. Requires Zn(2+) as cofactor.

It carries out the reaction adenosine + H2O + H(+) = inosine + NH4(+). The enzyme catalyses 2'-deoxyadenosine + H2O + H(+) = 2'-deoxyinosine + NH4(+). Its function is as follows. Catalyzes the hydrolytic deamination of adenosine and 2-deoxyadenosine. This is Adenosine deaminase from Yersinia pseudotuberculosis serotype O:1b (strain IP 31758).